The chain runs to 448 residues: Solute carrier family 52, riboflavin transporter, member 2 (448 aa).

Transmembrane regions (helical) follow at residues 14–34, 47–67, 79–99, 105–125, and 147–167; these read LLVALLGMGSWAAVNGIWVEL, LPSYLSVVVALGNLGLLVVTL, VPIQVVQVLSVVGTALLAPLW, VAGQLHSVAFLTLALVLALAC, and FFLGQGLSALLPCVLALVQGV. An N-linked (GlcNAc...) asparagine glycan is attached at asparagine 178. A helical membrane pass occupies residues 198-218; sequence WALTALLVTSAAAFQGLLLLL. A disordered region spans residues 228-267; the sequence is GAGPELPLGSPGAEEEEKEEEEALPLQEPPSQAAGTIPGP. Residues 240–250 are compositionally biased toward acidic residues; it reads AEEEEKEEEEA. Transmembrane regions (helical) follow at residues 280-300, 315-335, 342-362, 369-389, and 407-427; these read AFLLGLLAITSALTNGVLPAV, LAVVLGSAANPLACFLAMGVL, LVGLSLLGMLFGAYLMVLAIL, VGTTAGVVLVVLSWVLCLCVF, and ALLAAGVAIQMGSLLGAGTMF.

The protein belongs to the riboflavin transporter family.

The protein resides in the cell membrane. It carries out the reaction riboflavin(in) = riboflavin(out). Its activity is regulated as follows. Riboflavin transport is Na(+)-independent but moderately pH-sensitive. Activity is strongly inhibited by riboflavin analogs, such as lumiflavin. Weakly inhibited by flavin adenine dinucleotide (FAD) and flavin mononucleotide (FMN). Functionally, plasma membrane transporter mediating the uptake by cells of the water soluble vitamin B2/riboflavin that plays a key role in biochemical oxidation-reduction reactions of the carbohydrate, lipid, and amino acid metabolism. May also act as a receptor for 4-hydroxybutyrate. (Microbial infection) In case of infection by retroviruses, acts as a cell receptor to retroviral envelopes similar to the porcine endogenous retrovirus (PERV-A). The polypeptide is Solute carrier family 52, riboflavin transporter, member 2 (SLC52A2) (Papio hamadryas (Hamadryas baboon)).